Here is a 263-residue protein sequence, read N- to C-terminus: Endonuclease 8 (263 aa).

Pro-2 acts as the Schiff-base intermediate with DNA in catalysis. Glu-3 acts as the Proton donor in catalysis. The Proton donor; for beta-elimination activity role is filled by Lys-53. Residues Gln-70, Arg-125, and Asn-169 each contribute to the DNA site. An FPG-type zinc finger spans residues 229–263 (KVFHRDGEACERCGGIIEKTTLSSRPFYWCPHCQK). Residue Arg-253 is the Proton donor; for delta-elimination activity of the active site.

The protein belongs to the FPG family. It depends on Zn(2+) as a cofactor.

It carries out the reaction 2'-deoxyribonucleotide-(2'-deoxyribose 5'-phosphate)-2'-deoxyribonucleotide-DNA = a 3'-end 2'-deoxyribonucleotide-(2,3-dehydro-2,3-deoxyribose 5'-phosphate)-DNA + a 5'-end 5'-phospho-2'-deoxyribonucleoside-DNA + H(+). Its function is as follows. Involved in base excision repair of DNA damaged by oxidation or by mutagenic agents. Acts as a DNA glycosylase that recognizes and removes damaged bases. Has a preference for oxidized pyrimidines, such as thymine glycol, 5,6-dihydrouracil and 5,6-dihydrothymine. Has AP (apurinic/apyrimidinic) lyase activity and introduces nicks in the DNA strand. Cleaves the DNA backbone by beta-delta elimination to generate a single-strand break at the site of the removed base with both 3'- and 5'-phosphates. The polypeptide is Endonuclease 8 (Salmonella paratyphi A (strain AKU_12601)).